The chain runs to 291 residues: Probable plasmid-partitioning protein ParB (291 aa).

The protein belongs to the ParB family.

The polypeptide is Probable plasmid-partitioning protein ParB (Deinococcus radiodurans (strain ATCC 13939 / DSM 20539 / JCM 16871 / CCUG 27074 / LMG 4051 / NBRC 15346 / NCIMB 9279 / VKM B-1422 / R1)).